A 362-amino-acid polypeptide reads, in one-letter code: Alternative oxidase, mitochondrial (362 aa).

The N-terminal 64 residues, 1 to 64, are a transit peptide targeting the mitochondrion; the sequence is MNTPKVNILH…RNFSTTSVTR (64 aa). Residues 156 to 176 form a helical membrane-spanning segment; it reads LVRFIFLESIAGVPGMVAGML. Residues Glu163, Glu202, and His205 each contribute to the Fe cation site. The helical transmembrane segment at 222–242 threads the bilayer; the sequence is LILGAQGVFFNAMFLSYLISP. Fe cation contacts are provided by Glu253, Glu310, and His313.

It belongs to the alternative oxidase family. Homodimer; disulfide-linked. It depends on Fe cation as a cofactor.

Its subcellular location is the mitochondrion inner membrane. Catalyzes cyanide-resistant oxygen consumption. May increase respiration when the cytochrome respiratory pathway is restricted, or in response to low temperatures. The polypeptide is Alternative oxidase, mitochondrial (aod-1) (Neurospora crassa (strain ATCC 24698 / 74-OR23-1A / CBS 708.71 / DSM 1257 / FGSC 987)).